The chain runs to 299 residues: Protein-methionine-sulfoxide reductase catalytic subunit MsrP (299 aa).

The segment at residues 1-44 (MAHRWINDLTPADITPRGAWMNRRQVMAGMAGAGLAAFAGSAQA) is a signal peptide (tat-type signal). Mo-molybdopterin-binding positions include Asn59, 62 to 63 (YE), Cys117, Thr152, Asn200, Arg205, and 216 to 218 (SIK).

This sequence belongs to the MsrP family. As to quaternary structure, heterodimer of a catalytic subunit (MsrP) and a heme-binding subunit (MsrQ). Mo-molybdopterin is required as a cofactor. Predicted to be exported by the Tat system. The position of the signal peptide cleavage has not been experimentally proven.

It is found in the periplasm. The catalysed reaction is L-methionyl-[protein] + a quinone + H2O = L-methionyl-(S)-S-oxide-[protein] + a quinol. It carries out the reaction L-methionyl-[protein] + a quinone + H2O = L-methionyl-(R)-S-oxide-[protein] + a quinol. Functionally, part of the MsrPQ system that repairs oxidized periplasmic proteins containing methionine sulfoxide residues (Met-O), using respiratory chain electrons. Thus protects these proteins from oxidative-stress damage caused by reactive species of oxygen and chlorine generated by the host defense mechanisms. MsrPQ is essential for the maintenance of envelope integrity under bleach stress, rescuing a wide series of structurally unrelated periplasmic proteins from methionine oxidation. The catalytic subunit MsrP is non-stereospecific, being able to reduce both (R-) and (S-) diastereoisomers of methionine sulfoxide. This Ruegeria pomeroyi (strain ATCC 700808 / DSM 15171 / DSS-3) (Silicibacter pomeroyi) protein is Protein-methionine-sulfoxide reductase catalytic subunit MsrP.